The following is a 288-amino-acid chain: MSSYSTRQVGAANTLDYKVYIEKDGKLVSPFHDIPLYANEEKTILNMIVEVPRWTNAKLEISKEQKLNPIIQDTKKGKLRFVRNCFPHHGYIHNYGAFPQTWEDPNQSHPETKAKGDNDPLDVCEIGEKVATVGEVKQVKVLGVMALLDEGETDWKVIVIDVNDPLAPKLNDIEDVETHLPGLLRATNEWFRIYKIPDGKPENQFAFSGECKNKKYAEEVIGECAEAWEKLIKGESVDSKGIDLTNTTLSSTPSYSDAAAQEIPSASPAPAAPIDKSIDKWFFISGAH.

Residue Arg-80 participates in diphosphate binding. Residues Asp-117, Asp-122, and Asp-154 each coordinate Mg(2+). The disordered stretch occupies residues Thr-252–Ala-271. The span at Ala-258–Ala-271 shows a compositional bias: low complexity.

Belongs to the PPase family. Requires Mg(2+) as cofactor.

The protein localises to the cytoplasm. The catalysed reaction is diphosphate + H2O = 2 phosphate + H(+). The sequence is that of Inorganic pyrophosphatase (IPP1) from Candida albicans (strain SC5314 / ATCC MYA-2876) (Yeast).